A 72-amino-acid polypeptide reads, in one-letter code: Translation initiation factor IF-1 (72 aa).

The region spanning 1-72 is the S1-like domain; sequence MAKEDCIEME…SKGRIIYRAR (72 aa).

This sequence belongs to the IF-1 family. In terms of assembly, component of the 30S ribosomal translation pre-initiation complex which assembles on the 30S ribosome in the order IF-2 and IF-3, IF-1 and N-formylmethionyl-tRNA(fMet); mRNA recruitment can occur at any time during PIC assembly.

It localises to the cytoplasm. In terms of biological role, one of the essential components for the initiation of protein synthesis. Stabilizes the binding of IF-2 and IF-3 on the 30S subunit to which N-formylmethionyl-tRNA(fMet) subsequently binds. Helps modulate mRNA selection, yielding the 30S pre-initiation complex (PIC). Upon addition of the 50S ribosomal subunit IF-1, IF-2 and IF-3 are released leaving the mature 70S translation initiation complex. This chain is Translation initiation factor IF-1, found in Pseudoalteromonas atlantica (strain T6c / ATCC BAA-1087).